Consider the following 1940-residue polypeptide: Myosin-3 (1940 aa).

The region spanning 33–82 is the Myosin N-terminal SH3-like domain; it reads DAKTYCFVVDSKEEYVKGKIKSSQDGKVTVETEDSRTLVVKPEDVYAMNP. Residues 86-779 form the Myosin motor domain; the sequence is DKIEDMAMLT…LLGTLEEMRD (694 aa). K130 carries the N6,N6,N6-trimethyllysine modification. An ATP-binding site is contributed by 179-186; it reads GESGAGKT. Actin-binding stretches follow at residues 656–678 and 758–772; these read LNKL…IPNE and KFGH…GLLG. In terms of domain architecture, IQ spans 782–811; that stretch reads LAKLITRTQAVCRGFLMRVEFQKMMQRRES. The stretch at 841–1928 forms a coiled coil; it reads LKSAETEKEM…NKLRAKTRDF (1088 aa). The disordered stretch occupies residues 1260–1289; that stretch reads ARGKNEEMQRSLSELTTQKSRLQTEAGELS. The span at 1269–1282 shows a compositional bias: polar residues; sequence RSLSELTTQKSRLQ.

It belongs to the TRAFAC class myosin-kinesin ATPase superfamily. Myosin family. As to quaternary structure, muscle myosin is a hexameric protein that consists of 2 heavy chain subunits (MHC), 2 alkali light chain subunits (MLC) and 2 regulatory light chain subunits (MLC-2).

It localises to the cytoplasm. It is found in the myofibril. In terms of biological role, muscle contraction. The protein is Myosin-3 (Myh3) of Mus musculus (Mouse).